The following is a 378-amino-acid chain: Lipid-A-disaccharide synthase (378 aa).

Belongs to the LpxB family.

It catalyses the reaction a lipid X + a UDP-2-N,3-O-bis[(3R)-3-hydroxyacyl]-alpha-D-glucosamine = a lipid A disaccharide + UDP + H(+). It functions in the pathway bacterial outer membrane biogenesis; LPS lipid A biosynthesis. Functionally, condensation of UDP-2,3-diacylglucosamine and 2,3-diacylglucosamine-1-phosphate to form lipid A disaccharide, a precursor of lipid A, a phosphorylated glycolipid that anchors the lipopolysaccharide to the outer membrane of the cell. In Methylobacillus flagellatus (strain ATCC 51484 / DSM 6875 / VKM B-1610 / KT), this protein is Lipid-A-disaccharide synthase.